The chain runs to 146 residues: Large ribosomal subunit protein uL15 (146 aa).

Residues Met1–Arg13 show a composition bias toward basic and acidic residues. The interval Met1 to Leu55 is disordered. Residues Ala23–Gln35 are compositionally biased toward gly residues.

The protein belongs to the universal ribosomal protein uL15 family. Part of the 50S ribosomal subunit.

Binds to the 23S rRNA. The protein is Large ribosomal subunit protein uL15 of Staphylococcus carnosus (strain TM300).